Reading from the N-terminus, the 740-residue chain is Protein SIEVE ELEMENT OCCLUSION B (740 aa).

Residues Met-1 to Thr-23 are compositionally biased toward polar residues. The interval Met-1–Glu-27 is disordered.

Can form homodimer. As to expression, expressed in phloem sieve elements.

Functionally, scaffold protein required to form the phloem filament matrix in sieve elements. This Arabidopsis thaliana (Mouse-ear cress) protein is Protein SIEVE ELEMENT OCCLUSION B.